The primary structure comprises 642 residues: Capsid vertex component 2 (642 aa).

Positions 1–48 are interaction with major capsid protein/MCP; the sequence is MSLLHTFWRLPVAVFFEPHEENVLRCPERVLRRLLEDAAVTMRGGGWR. The interval 97–125 is disordered; that stretch reads DEGPSPRTLLQPPCRPRSSSPGTGVAGAS.

It belongs to the herpesviridae CVC2 protein family. As to quaternary structure, heterodimerizes with CVC1. Interacts with major capsid protein/MCP and triplex capsid protein 1/TRX1 at the pentamer vertices. Interacts with the large tegument protein/LTP.

It is found in the virion. The protein resides in the host nucleus. Functionally, capsid vertex-specific component that plays a role during viral DNA encapsidation, assuring correct genome cleavage and presumably stabilizing capsids that contain full-length viral genomes. Participates in the interaction between the capsid and the tegument through interaction with the large tegument protein/LTP. The chain is Capsid vertex component 2 from Homo sapiens (Human).